We begin with the raw amino-acid sequence, 500 residues long: Probable malate:quinone oxidoreductase (500 aa).

It belongs to the MQO family. Requires FAD as cofactor.

It catalyses the reaction (S)-malate + a quinone = a quinol + oxaloacetate. It participates in carbohydrate metabolism; tricarboxylic acid cycle; oxaloacetate from (S)-malate (quinone route): step 1/1. The protein is Probable malate:quinone oxidoreductase of Bacillus cereus (strain ATCC 10987 / NRS 248).